A 363-amino-acid chain; its full sequence is 3-methyl-D-ornithine--L-lysine ligase (363 aa).

Residue Lys-10 coordinates ATP. 11-12 is an L-lysine binding site; the sequence is LQ. ATP is bound by residues Asp-31, 49–50, and 72–73; these read DV and EN. Glu-72 contacts L-lysine. In terms of domain architecture, ATP-grasp spans 85 to 269; the sequence is EEFSCPVLFD…LIELLFRAFG (185 aa). Residues Lys-104, Lys-131, Ser-138, and 160–163 contribute to the ADP site; that span reads EEYV. Residues 169–171 and Asp-225 each bind D-ornithine; that span reads SLE. Mg(2+) contacts are provided by Glu-227, Glu-239, and Asp-241. Glu-239 provides a ligand contact to ADP. D-ornithine is bound by residues 243 to 248 and Glu-302; that span reads RFPSQT. Residues Ser-246 and Glu-302 each coordinate L-lysine.

This sequence belongs to the PylC family. Mg(2+) serves as cofactor.

The enzyme catalyses (3R)-3-methyl-D-ornithine + L-lysine + ATP = (3R)-3-methyl-D-ornithyl-N(6)-L-lysine + ADP + phosphate + H(+). It functions in the pathway amino-acid biosynthesis; L-pyrrolysine biosynthesis. Its function is as follows. Is required for the biosynthesis of pyrrolysine. Catalyzes the ATP-dependent ligation between (3R)-3-methyl-D-ornithine and L-lysine, leading to (3R)-3-methyl-D-ornithyl-N6-L-lysine. In Methanosarcina acetivorans (strain ATCC 35395 / DSM 2834 / JCM 12185 / C2A), this protein is 3-methyl-D-ornithine--L-lysine ligase.